Reading from the N-terminus, the 481-residue chain is Aspartyl/glutamyl-tRNA(Asn/Gln) amidotransferase subunit B (481 aa).

Belongs to the GatB/GatE family. GatB subfamily. Heterotrimer of A, B and C subunits.

The catalysed reaction is L-glutamyl-tRNA(Gln) + L-glutamine + ATP + H2O = L-glutaminyl-tRNA(Gln) + L-glutamate + ADP + phosphate + H(+). The enzyme catalyses L-aspartyl-tRNA(Asn) + L-glutamine + ATP + H2O = L-asparaginyl-tRNA(Asn) + L-glutamate + ADP + phosphate + 2 H(+). In terms of biological role, allows the formation of correctly charged Asn-tRNA(Asn) or Gln-tRNA(Gln) through the transamidation of misacylated Asp-tRNA(Asn) or Glu-tRNA(Gln) in organisms which lack either or both of asparaginyl-tRNA or glutaminyl-tRNA synthetases. The reaction takes place in the presence of glutamine and ATP through an activated phospho-Asp-tRNA(Asn) or phospho-Glu-tRNA(Gln). In Pseudomonas syringae pv. tomato (strain ATCC BAA-871 / DC3000), this protein is Aspartyl/glutamyl-tRNA(Asn/Gln) amidotransferase subunit B.